Here is a 219-residue protein sequence, read N- to C-terminus: Ion-translocating oxidoreductase complex subunit G (219 aa).

The chain crosses the membrane as a helical span at residues 25-45; it reads GLLLGLFSLVSALMLALASDA. Thr187 is subject to FMN phosphoryl threonine.

Belongs to the RnfG family. In terms of assembly, the complex is composed of six subunits: RnfA, RnfB, RnfC, RnfD, RnfE and RnfG. Requires FMN as cofactor.

It is found in the cellular chromatophore membrane. In terms of biological role, part of a membrane-bound complex that couples electron transfer with translocation of ions across the membrane. The protein is Ion-translocating oxidoreductase complex subunit G of Cereibacter sphaeroides (strain ATCC 17029 / ATH 2.4.9) (Rhodobacter sphaeroides).